We begin with the raw amino-acid sequence, 57 residues long: Kunitz-type serine protease inhibitor 2 (57 aa).

Residues 5 to 55 form the BPTI/Kunitz inhibitor domain; the sequence is CELPAETGLCKARIRSFHYNRAAQQCLEFIYGGCGGNANRFKTIDECHRTC. Disulfide bonds link Cys-5-Cys-55, Cys-14-Cys-38, and Cys-30-Cys-51.

The protein belongs to the venom Kunitz-type family. As to expression, expressed by the venom gland.

Its subcellular location is the secreted. In terms of biological role, serine protease inhibitor. In Naja nivea (Cape cobra), this protein is Kunitz-type serine protease inhibitor 2.